The chain runs to 259 residues: Peroxiredoxin-4 (259 aa).

A Thioredoxin domain is found at 66 to 224 (IRIRKPAPAF…AIRTLKALKF (159 aa)). The Cysteine sulfenic acid (-SOH) intermediate role is filled by cysteine 111.

The protein belongs to the peroxiredoxin family. AhpC/Prx1 subfamily. As to quaternary structure, homodimer; disulfide-linked, upon oxidation. 5 homodimers assemble to form a ring-like decamer.

The protein resides in the cytoplasm. Its subcellular location is the endoplasmic reticulum. It catalyses the reaction a hydroperoxide + [thioredoxin]-dithiol = an alcohol + [thioredoxin]-disulfide + H2O. In terms of biological role, thiol-specific peroxidase that catalyzes the reduction of hydrogen peroxide and organic hydroperoxides to water and alcohols, respectively. Plays a role in cell protection against oxidative stress by detoxifying peroxides and as sensor of hydrogen peroxide-mediated signaling events. Regulates the activation of NF-kappa-B in the cytosol by a modulation of I-kappa-B-alpha phosphorylation. This Dictyostelium discoideum (Social amoeba) protein is Peroxiredoxin-4 (prdx4).